A 210-amino-acid chain; its full sequence is Probable GTP-binding protein EngB (210 aa).

Residues 25–199 form the EngB-type G domain; sequence CGIEVAFAGR…RQKLDSWFSE (175 aa). GTP contacts are provided by residues 33-40, 60-64, 78-81, 145-148, and 178-180; these read GRSNAGKS, GRTQL, DLPG, TKAD, and FSS. Mg(2+)-binding residues include S40 and T62.

This sequence belongs to the TRAFAC class TrmE-Era-EngA-EngB-Septin-like GTPase superfamily. EngB GTPase family. Requires Mg(2+) as cofactor.

Necessary for normal cell division and for the maintenance of normal septation. In Salmonella dublin (strain CT_02021853), this protein is Probable GTP-binding protein EngB.